Reading from the N-terminus, the 129-residue chain is Large ribosomal subunit protein uL22 (129 aa).

This sequence belongs to the universal ribosomal protein uL22 family. As to quaternary structure, part of the 50S ribosomal subunit.

In terms of biological role, this protein binds specifically to 23S rRNA; its binding is stimulated by other ribosomal proteins, e.g. L4, L17, and L20. It is important during the early stages of 50S assembly. It makes multiple contacts with different domains of the 23S rRNA in the assembled 50S subunit and ribosome. The globular domain of the protein is located near the polypeptide exit tunnel on the outside of the subunit, while an extended beta-hairpin is found that lines the wall of the exit tunnel in the center of the 70S ribosome. The polypeptide is Large ribosomal subunit protein uL22 (Rhizobium etli (strain ATCC 51251 / DSM 11541 / JCM 21823 / NBRC 15573 / CFN 42)).